A 732-amino-acid polypeptide reads, in one-letter code: Prolyl endopeptidase-like (732 aa).

Catalysis depends on charge relay system residues serine 575, aspartate 661, and histidine 707.

This sequence belongs to the peptidase S9A family. Homodimer.

The protein localises to the cytoplasm. It localises to the cytosol. In terms of biological role, serine peptidase whose precise substrate specificity remains unclear. Does not cleave peptides after a arginine or lysine residue. Regulates trans-Golgi network morphology and sorting by regulating the membrane binding of the AP-1 complex. May play a role in the regulation of synaptic vesicle exocytosis. This Gallus gallus (Chicken) protein is Prolyl endopeptidase-like (PREPL).